Consider the following 157-residue polypeptide: S-ribosylhomocysteine lyase (157 aa).

Fe cation is bound by residues H54, H58, and C126.

It belongs to the LuxS family. Homodimer. Fe cation serves as cofactor.

It catalyses the reaction S-(5-deoxy-D-ribos-5-yl)-L-homocysteine = (S)-4,5-dihydroxypentane-2,3-dione + L-homocysteine. Involved in the synthesis of autoinducer 2 (AI-2) which is secreted by bacteria and is used to communicate both the cell density and the metabolic potential of the environment. The regulation of gene expression in response to changes in cell density is called quorum sensing. Catalyzes the transformation of S-ribosylhomocysteine (RHC) to homocysteine (HC) and 4,5-dihydroxy-2,3-pentadione (DPD). The sequence is that of S-ribosylhomocysteine lyase from Bacillus cytotoxicus (strain DSM 22905 / CIP 110041 / 391-98 / NVH 391-98).